Here is a 174-residue protein sequence, read N- to C-terminus: Chaperonin-like RBCX protein 1, chloroplastic (174 aa).

The N-terminal 45 residues, 1 to 45 (MESSSSLLHHSYLSYLNPKFGKRPLVSYPLMQSSRKCKQTRICSN), are a transit peptide targeting the chloroplast.

The protein belongs to the RbcX family. Homodimer. Interacts with rbcL, atpB and THI1.

It is found in the plastid. Its subcellular location is the chloroplast. Its function is as follows. Chaperone involved in RuBisCO assembly process. The polypeptide is Chaperonin-like RBCX protein 1, chloroplastic (Arabidopsis thaliana (Mouse-ear cress)).